The primary structure comprises 388 residues: GTPase Obg (388 aa).

The Obg domain occupies 4 to 162 (SNFVDYVKIY…MTVIMELKLL (159 aa)). An OBG-type G domain is found at 163–329 (ADVGLVGFPN…LKDILWEELN (167 aa)). Residues 169–176 (GFPNAGKS), 194–198 (FTTLE), 216–219 (DIPG), 283–286 (TKSD), and 310–312 (SSV) each bind GTP. Residues Ser-176 and Thr-196 each coordinate Mg(2+). The disordered stretch occupies residues 352–388 (LKDMGEDEELDYEYEEDADDEDDDLDYEYEEEDWEEK). A compositionally biased stretch (acidic residues) spans 356-388 (GEDEELDYEYEEDADDEDDDLDYEYEEEDWEEK).

Belongs to the TRAFAC class OBG-HflX-like GTPase superfamily. OBG GTPase family. As to quaternary structure, monomer. It depends on Mg(2+) as a cofactor.

The protein localises to the cytoplasm. An essential GTPase which binds GTP, GDP and possibly (p)ppGpp with moderate affinity, with high nucleotide exchange rates and a fairly low GTP hydrolysis rate. Plays a role in control of the cell cycle, stress response, ribosome biogenesis and in those bacteria that undergo differentiation, in morphogenesis control. The protein is GTPase Obg of Bacteroides thetaiotaomicron (strain ATCC 29148 / DSM 2079 / JCM 5827 / CCUG 10774 / NCTC 10582 / VPI-5482 / E50).